Consider the following 235-residue polypeptide: Demethylmenaquinone methyltransferase (235 aa).

Residues Thr-58, Asp-79, and Asn-106–Ala-107 each bind S-adenosyl-L-methionine.

It belongs to the class I-like SAM-binding methyltransferase superfamily. MenG/UbiE family.

The enzyme catalyses a 2-demethylmenaquinol + S-adenosyl-L-methionine = a menaquinol + S-adenosyl-L-homocysteine + H(+). It participates in quinol/quinone metabolism; menaquinone biosynthesis; menaquinol from 1,4-dihydroxy-2-naphthoate: step 2/2. In terms of biological role, methyltransferase required for the conversion of demethylmenaquinol (DMKH2) to menaquinol (MKH2). In Shouchella clausii (strain KSM-K16) (Alkalihalobacillus clausii), this protein is Demethylmenaquinone methyltransferase.